Consider the following 611-residue polypeptide: Phosphatidylinositol 3,4,5-trisphosphate 3-phosphatase and protein-tyrosine-phosphatase PTEN2A (611 aa).

Disordered regions lie at residues 1-42 (MSSE…GVAS) and 87-109 (GIRL…SSAT). Residue Ser-91 is modified to Phosphoserine. The segment covering 100–109 (TTTEGTSSAT) has biased composition (low complexity). A Phosphatase tensin-type domain is found at 145 to 324 (RRYQEGGFDL…KYFERILTYF (180 aa)). Residue Cys-263 is the Phosphocysteine intermediate of the active site. The C2 tensin-type domain occupies 331–458 (GRRCMLRGFR…FMVEVVLADI (128 aa)). Polar residues predominate over residues 462 to 486 (IPTNPSSETASKTPEETSAANSSPV). Residues 462 to 589 (IPTNPSSETA…VNASSSSESE (128 aa)) are disordered. Positions 495 to 507 (PDKETENPDKDDV) are enriched in basic and acidic residues. Phosphoserine is present on Ser-509. 2 stretches are compositionally biased toward polar residues: residues 514 to 530 (DSTG…SQTP) and 549 to 565 (VSIS…QGVT).

It belongs to the PTEN phosphatase protein family. In terms of tissue distribution, expressed in seedlings, roots, stems, leaves, flowers and siliques. However, at protein level, not observed in older leaves and mature siliques.

It catalyses the reaction O-phospho-L-tyrosyl-[protein] + H2O = L-tyrosyl-[protein] + phosphate. The enzyme catalyses a 1,2-diacyl-sn-glycero-3-phospho-(1D-myo-inositol-3,4,5-trisphosphate) + H2O = a 1,2-diacyl-sn-glycero-3-phospho-(1D-myo-inositol-4,5-bisphosphate) + phosphate. Functionally, binds phosphatidic acid. Protein tyrosine phosphatase that also exhibits lipid phosphatase activity. Hydrolyzed poorly p-nitrophenyl phosphate (p-NPP). Can use PtdIns isomers as substrates. Removes efficiently phosphate from the D3 position of the inositol ring, less from the D4 position and not at all from the D5 position on monophosphorylated PtdIns isomers (PIPs). The presence of a phosphate group in the D5 position on PIP(2) isomers reduces lipid phosphatase activity. Mostly active on PtdIns(3)P and PtdIns(3,4)P(2), to a lower extent, on PtdIns(4)P and PtdIns(3,5)P(2), but barely against PtdIns(3,4,5)P(3) as substrate. The chain is Phosphatidylinositol 3,4,5-trisphosphate 3-phosphatase and protein-tyrosine-phosphatase PTEN2A from Arabidopsis thaliana (Mouse-ear cress).